A 278-amino-acid polypeptide reads, in one-letter code: Pantothenate synthetase (278 aa).

30-37 (MGGLHQGH) is an ATP binding site. Histidine 37 serves as the catalytic Proton donor. Glutamine 61 contacts (R)-pantoate. Glutamine 61 lines the beta-alanine pocket. 146–149 (GQKD) provides a ligand contact to ATP. Glutamine 152 contacts (R)-pantoate. ATP is bound by residues isoleucine 175 and 183 to 186 (MSTR).

It belongs to the pantothenate synthetase family. In terms of assembly, homodimer.

It localises to the cytoplasm. The enzyme catalyses (R)-pantoate + beta-alanine + ATP = (R)-pantothenate + AMP + diphosphate + H(+). It participates in cofactor biosynthesis; (R)-pantothenate biosynthesis; (R)-pantothenate from (R)-pantoate and beta-alanine: step 1/1. Functionally, catalyzes the condensation of pantoate with beta-alanine in an ATP-dependent reaction via a pantoyl-adenylate intermediate. This is Pantothenate synthetase from Ruthia magnifica subsp. Calyptogena magnifica.